A 385-amino-acid chain; its full sequence is Probable thioesterase PNKD (385 aa).

Residues 32 to 58 form a disordered region; it reads KASHNRTRALQSHSSPEGKEEPEPLSP. The Zn(2+) site is built by His172, His174, Asp176, His177, His229, Asp253, and His291.

Belongs to the metallo-beta-lactamase superfamily. Glyoxalase II family. In terms of assembly, isoform 2 interacts with the sarcomeric proteins, MRLC2, MYOM1 and ENO3. The cofactor is Zn(2+). Post-translationally, undergoes cleavage at the N-terminus. As to expression, isoform 1 is only expressed in the brain. Isoform 2 is ubiquitously detected with highest expression in skeletal muscle and detected in myocardial myofibrils.

It localises to the cell membrane. The protein localises to the mitochondrion. The protein resides in the cytoplasm. Its subcellular location is the golgi apparatus. It is found in the endoplasmic reticulum. It catalyses the reaction a thioester + H2O = a thiol + a carboxylate + H(+). Its function is as follows. Probable thioesterase that may play a role in cellular detoxification processes; it likely acts on a yet-unknown alpha-hydroxythioester substrate. In vitro, it is able to catalyze the hydrolysis of S-D-lactoyl-glutathione to form glutathione and D-lactic acid at very low rate, though this reaction is not physiologically relevant in vivo. The polypeptide is Probable thioesterase PNKD (PNKD) (Homo sapiens (Human)).